The primary structure comprises 66 residues: Beta-defensin 107A (66 aa).

The signal sequence occupies residues 1–22; that stretch reads MKIFFFIFAALILLAQIFQART. Disulfide bonds link cysteine 37–cysteine 51 and cysteine 41–cysteine 60.

Belongs to the beta-defensin family.

Its subcellular location is the secreted. In terms of biological role, has antibacterial activity. The chain is Beta-defensin 107A (DEFB107A) from Hylobates lar (Lar gibbon).